The primary structure comprises 452 residues: Neuronal acetylcholine receptor subunit alpha-5 (452 aa).

Positions 1-27 are cleaved as a signal peptide; that stretch reads MVQLLAGRWRPTGARRGTRGGLPELSS. The Extracellular segment spans residues 28–239; the sequence is AAKHEDSLFR…VIKRLPLFYT (212 aa). Asparagine 140, asparagine 168, and asparagine 214 each carry an N-linked (GlcNAc...) asparagine glycan. An intrachain disulfide couples cysteine 155 to cysteine 169. A disulfide bridge links cysteine 219 with cysteine 220. Helical transmembrane passes span 240–260, 269–289, and 302–322; these read LFLI…FYLP, LCTS…EIIP, and LVFT…AINI. The Cytoplasmic portion of the chain corresponds to 323–414; sequence HHRSSSTHNA…KFIAQVLDRM (92 aa). Residues 415 to 435 traverse the membrane as a helical segment; it reads FLWTFLLVSIIGTLGLFVPVI. Residues 436–452 lie on the Extracellular side of the membrane; sequence YKWANIIVPVHIGNTIK.

Belongs to the ligand-gated ion channel (TC 1.A.9) family. Acetylcholine receptor (TC 1.A.9.1) subfamily. Alpha-5/CHRNA5 sub-subfamily. Neuronal AChR that forms heteropentamers composed of two different type of subunits: alpha and non-alpha (beta). CHRNA5/alpha-5 subunit is only able to form functional nAChRs when co-assembled with another alpha subunit, can be combined to CHRNA4/alpha-4 or CHRNA3/alpha-3 and CHRNB4/beta-4 or CHRNB2/beta-2 to give rise to functional receptors. Interacts with LYPD6.

It localises to the synaptic cell membrane. It is found in the cell membrane. It carries out the reaction Ca(2+)(in) = Ca(2+)(out). The enzyme catalyses K(+)(in) = K(+)(out). The catalysed reaction is Na(+)(in) = Na(+)(out). Its activity is regulated as follows. Activated by a myriad of ligands such as acetylcholine, cytisine, nicotine, choline and epibatidine. In terms of biological role, component of neuronal acetylcholine receptors (nAChRs) that function as pentameric, ligand-gated cation channels with high calcium permeability among other activities. nAChRs are excitatory neurotrasnmitter receptors formed by a collection of nAChR subunits known to mediate synaptic transmission in the nervous system and the neuromuscular junction. Each nAchR subunit confers differential attributes to channel properties, including activation, deactivation and desensitization kinetics, pH sensitivity, cation permeability, and binding to allosteric modulators. Has an accessory rather than functional role and is only able to form functional nAChRs when co-assembled with another beta subunit. Participates in pentameric assemblies along with CHRNA3, CHRNA4, CHRNB2 and CHRNB4. Increases receptor sensitivity to acetylcholine and nicotine when associated with CHRNA4 and CHRNB2. Plays a role in nicotine addiction. The chain is Neuronal acetylcholine receptor subunit alpha-5 (Chrna5) from Rattus norvegicus (Rat).